The following is a 204-amino-acid chain: Nicotine blue oxidoreductase (204 aa).

Homotetramer. The cofactor is FMN.

It catalyses the reaction 3,3'-bipyridine-2,2',5,5',6,6'-hexol + NADP(+) = (E)-2,2',5,5'-tetrahydroxy-6H,6'H-(3,3'-bipyridinylidene)-6,6'-dione + NADPH + 3 H(+). It carries out the reaction 3,3'-bipyridine-2,2',5,5',6,6'-hexol + NAD(+) = (E)-2,2',5,5'-tetrahydroxy-6H,6'H-(3,3'-bipyridinylidene)-6,6'-dione + NADH + 3 H(+). Its pathway is alkaloid degradation; nicotine degradation. Its function is as follows. Catalyzes the reduction of nicotine blue to its hydroquinone form. Nicotine blue is the name given to the compound formed by the autocatalytic condensation of two molecules of 2,3,6-trihydroxypyridine, an intermediate in the nicotine degradation pathway. May play a role in preventing the intracellular formation of nicotine blue semiquinone radicals, which by redox cycling would lead to the formation of toxic reactive oxygen species. Besides nicotine blue, several other quinones are reduced by nboR. The sequence is that of Nicotine blue oxidoreductase (nboR) from Paenarthrobacter nicotinovorans (Arthrobacter nicotinovorans).